A 419-amino-acid chain; its full sequence is Gamma-glutamyl phosphate reductase (419 aa).

Belongs to the gamma-glutamyl phosphate reductase family.

It is found in the cytoplasm. It catalyses the reaction L-glutamate 5-semialdehyde + phosphate + NADP(+) = L-glutamyl 5-phosphate + NADPH + H(+). Its pathway is amino-acid biosynthesis; L-proline biosynthesis; L-glutamate 5-semialdehyde from L-glutamate: step 2/2. In terms of biological role, catalyzes the NADPH-dependent reduction of L-glutamate 5-phosphate into L-glutamate 5-semialdehyde and phosphate. The product spontaneously undergoes cyclization to form 1-pyrroline-5-carboxylate. This is Gamma-glutamyl phosphate reductase from Mannheimia succiniciproducens (strain KCTC 0769BP / MBEL55E).